The following is a 179-amino-acid chain: Inner membrane-spanning protein YciB (179 aa).

5 helical membrane-spanning segments follow: residues 22–42, 50–70, 76–96, 121–141, and 149–169; these read IYAATSALIVATAIVLIYSWV, MALITFVLVAVFGGLTIFFHN, WKVTVIYGLFAGALLISQWVM, LAWAVFFILCGLANIYIAFWL, and FKVFGLTALTLIFTLLSGVYI.

This sequence belongs to the YciB family.

The protein localises to the cell inner membrane. Its function is as follows. Plays a role in cell envelope biogenesis, maintenance of cell envelope integrity and membrane homeostasis. In Citrobacter koseri (strain ATCC BAA-895 / CDC 4225-83 / SGSC4696), this protein is Inner membrane-spanning protein YciB.